We begin with the raw amino-acid sequence, 60 residues long: UPF0434 protein PM0859 (60 aa).

Belongs to the UPF0434 family.

The polypeptide is UPF0434 protein PM0859 (Pasteurella multocida (strain Pm70)).